The chain runs to 240 residues: Octanoyltransferase (240 aa).

The segment at 1 to 22 is disordered; sequence MGTTGTNDGATTPPANTSTPAV. A compositionally biased stretch (low complexity) spans 10–21; sequence ATTPPANTSTPA. The 186-residue stretch at 51 to 236 folds into the BPL/LPL catalytic domain; that stretch reads EKIPDTILLL…NLVDALNGDL (186 aa). Residues 89-96, 166-168, and 179-181 each bind substrate; these read RGGRITWH, AIG, and GVA. Catalysis depends on Cys-197, which acts as the Acyl-thioester intermediate.

Belongs to the LipB family.

It is found in the cytoplasm. The enzyme catalyses octanoyl-[ACP] + L-lysyl-[protein] = N(6)-octanoyl-L-lysyl-[protein] + holo-[ACP] + H(+). It functions in the pathway protein modification; protein lipoylation via endogenous pathway; protein N(6)-(lipoyl)lysine from octanoyl-[acyl-carrier-protein]: step 1/2. Its function is as follows. Catalyzes the transfer of endogenously produced octanoic acid from octanoyl-acyl-carrier-protein onto the lipoyl domains of lipoate-dependent enzymes. Lipoyl-ACP can also act as a substrate although octanoyl-ACP is likely to be the physiological substrate. This chain is Octanoyltransferase, found in Corynebacterium jeikeium (strain K411).